The primary structure comprises 467 residues: Keratin, type 1 cytoskeletal 11 (467 aa).

The head stretch occupies residues 1–100 (MSYSSFSIAQ…GGTDFLLGTS (100 aa)). The span at 12-30 (SRVPSLSGTRSSSSYSLKS) shows a compositional bias: low complexity. A disordered region spans residues 12 to 32 (SRVPSLSGTRSSSSYSLKSDL). A coil 1A region spans residues 101-137 (GKEAMQNLNDRLADYLARVRSLEDRNRELEQKIREWY). The IF rod domain maps to 101 to 413 (GKEAMQNLND…TLLEGDAGRS (313 aa)). The linker 1 stretch occupies residues 138–156 (EKQGAGTKRKDFSHYFKII). The interval 157–248 (ADLQNQINAG…SHDEDMKALR (92 aa)) is coil 1B. The linker 12 stretch occupies residues 249 to 268 (SQLGGQVNVEVDAAPAEDLT). The interval 269–416 (KKLEIIRQRY…EGDAGRSHSS (148 aa)) is coil 2. The interval 409-430 (DAGRSHSSSHLSSTVSKDKVPV) is disordered. Residues 417-463 (SHLSSTVSKDKVPVSSPNVITKVRTIVEEKINGQVISKKEYEGSPDQ) are tail.

This sequence belongs to the intermediate filament family. Heterotetramer of two type I and two type II keratins. As to expression, expressed in the outermost cell layers of skin epidermis (at protein level).

The sequence is that of Keratin, type 1 cytoskeletal 11 from Protopterus aethiopicus (Marbled lungfish).